The sequence spans 145 residues: Large ribosomal subunit protein uL13 (145 aa).

This sequence belongs to the universal ribosomal protein uL13 family. In terms of assembly, part of the 50S ribosomal subunit.

Functionally, this protein is one of the early assembly proteins of the 50S ribosomal subunit, although it is not seen to bind rRNA by itself. It is important during the early stages of 50S assembly. The protein is Large ribosomal subunit protein uL13 of Bacillus cereus (strain G9842).